The primary structure comprises 406 residues: Bifunctional enzyme IspD/IspF (406 aa).

The segment at 1 to 247 (MSLIRVNGEA…AFFFNPAKDT (247 aa)) is 2-C-methyl-D-erythritol 4-phosphate cytidylyltransferase. The segment at 248–406 (FIGMGFDTHA…HVSMRYKQKL (159 aa)) is 2-C-methyl-D-erythritol 2,4-cyclodiphosphate synthase. A divalent metal cation is bound by residues Asp-254 and His-256. 4-CDP-2-C-methyl-D-erythritol 2-phosphate-binding positions include 254–256 (DTH) and 280–281 (HS). A divalent metal cation is bound at residue His-288. 4-CDP-2-C-methyl-D-erythritol 2-phosphate is bound by residues 302 to 304 (DIG), 307 to 311 (FPDND), 378 to 381 (TTME), Phe-385, and Lys-388.

The protein in the N-terminal section; belongs to the IspD/TarI cytidylyltransferase family. IspD subfamily. This sequence in the C-terminal section; belongs to the IspF family. The cofactor is a divalent metal cation.

The catalysed reaction is 2-C-methyl-D-erythritol 4-phosphate + CTP + H(+) = 4-CDP-2-C-methyl-D-erythritol + diphosphate. The enzyme catalyses 4-CDP-2-C-methyl-D-erythritol 2-phosphate = 2-C-methyl-D-erythritol 2,4-cyclic diphosphate + CMP. Its pathway is isoprenoid biosynthesis; isopentenyl diphosphate biosynthesis via DXP pathway; isopentenyl diphosphate from 1-deoxy-D-xylulose 5-phosphate: step 2/6. It participates in isoprenoid biosynthesis; isopentenyl diphosphate biosynthesis via DXP pathway; isopentenyl diphosphate from 1-deoxy-D-xylulose 5-phosphate: step 4/6. In terms of biological role, bifunctional enzyme that catalyzes the formation of 4-diphosphocytidyl-2-C-methyl-D-erythritol from CTP and 2-C-methyl-D-erythritol 4-phosphate (MEP) (IspD), and catalyzes the conversion of 4-diphosphocytidyl-2-C-methyl-D-erythritol 2-phosphate (CDP-ME2P) to 2-C-methyl-D-erythritol 2,4-cyclodiphosphate (ME-CPP) with a corresponding release of cytidine 5-monophosphate (CMP) (IspF). The protein is Bifunctional enzyme IspD/IspF of Helicobacter pylori (strain HPAG1).